We begin with the raw amino-acid sequence, 108 residues long: Large ribosomal subunit protein uL24 (108 aa).

It belongs to the universal ribosomal protein uL24 family. As to quaternary structure, part of the 50S ribosomal subunit.

One of two assembly initiator proteins, it binds directly to the 5'-end of the 23S rRNA, where it nucleates assembly of the 50S subunit. In terms of biological role, one of the proteins that surrounds the polypeptide exit tunnel on the outside of the subunit. The polypeptide is Large ribosomal subunit protein uL24 (Moorella thermoacetica (strain ATCC 39073 / JCM 9320)).